Consider the following 299-residue polypeptide: Homoserine O-acetyltransferase (299 aa).

The active-site Acyl-thioester intermediate is the C142. Substrate is bound by residues K163 and S192. H235 serves as the catalytic Proton acceptor. Residue E237 is part of the active site. A substrate-binding site is contributed by R249.

It belongs to the MetA family.

The protein resides in the cytoplasm. It carries out the reaction L-homoserine + acetyl-CoA = O-acetyl-L-homoserine + CoA. It functions in the pathway amino-acid biosynthesis; L-methionine biosynthesis via de novo pathway; O-acetyl-L-homoserine from L-homoserine: step 1/1. In terms of biological role, transfers an acetyl group from acetyl-CoA to L-homoserine, forming acetyl-L-homoserine. This Synechococcus elongatus (strain ATCC 33912 / PCC 7942 / FACHB-805) (Anacystis nidulans R2) protein is Homoserine O-acetyltransferase.